The following is a 93-amino-acid chain: uncharacterized protein (93 aa).

A helical transmembrane segment spans residues 68 to 88; that stretch reads WLVTVVLANGVVSLFLLGGLI.

It is found in the membrane. This is an uncharacterized protein from Mycoplasma pneumoniae (strain ATCC 29342 / M129 / Subtype 1) (Mycoplasmoides pneumoniae).